The primary structure comprises 376 residues: Geranylgeranyl transferase type-1 subunit beta (376 aa).

4 PFTB repeats span residues 128–179, 192–231, 259–301, and 310–353; these read KRSL…YICG, TEKL…ALLS, MKFE…HLLT, and TELV…ALIE. Residues 216–218 and 280–283 each bind geranylgeranyl diphosphate; these read HSG and RENK. Asp286 and Cys288 together coordinate Zn(2+). A geranylgeranyl diphosphate-binding site is contributed by 289 to 292; that stretch reads YAFW. Position 341 (His341) interacts with Zn(2+).

Belongs to the protein prenyltransferase subunit beta family. Heterodimer of an alpha (RAM2) and a beta (CDC43) subunit. Zn(2+) serves as cofactor. The cofactor is Mg(2+).

It is found in the cytoplasm. It catalyses the reaction geranylgeranyl diphosphate + L-cysteinyl-[protein] = S-geranylgeranyl-L-cysteinyl-[protein] + diphosphate. Its function is as follows. Catalyzes the transfer of a geranyl-geranyl moiety from geranyl-geranyl diphosphate to proteins having the C-terminal sequence Cys-Ile-Ile-Leu or Cys-Val-Leu-Leu. Acts, among other substrates, on Rho1 and Rho2 and CDC42 proteins. Participates in a RAS-like C-terminal modification of proteins involved in nuclear division and bud growth. It is involved in bud positioning and cell polarity. The beta subunit is responsible for isoprenoid and peptide-binding. This is Geranylgeranyl transferase type-1 subunit beta (CDC43) from Saccharomyces cerevisiae (strain ATCC 204508 / S288c) (Baker's yeast).